The chain runs to 314 residues: Malate dehydrogenase (314 aa).

Residues Gly12–Gly17 and Asp36 contribute to the NAD(+) site. Arg87 and Arg93 together coordinate substrate. NAD(+)-binding positions include Asn100 and Leu123–Asn125. Residue Asn125 coordinates substrate. Position 149 is a phosphoserine (Ser149). Substrate is bound at residue Arg156. The Proton acceptor role is filled by His180.

Belongs to the LDH/MDH superfamily. MDH type 3 family.

It carries out the reaction (S)-malate + NAD(+) = oxaloacetate + NADH + H(+). Its function is as follows. Catalyzes the reversible oxidation of malate to oxaloacetate. The chain is Malate dehydrogenase from Shouchella clausii (strain KSM-K16) (Alkalihalobacillus clausii).